The following is a 180-amino-acid chain: Nucleoside-triphosphatase THEP1 (180 aa).

ATP is bound by residues 8 to 15 (GPVGSIKA) and 100 to 107 (VIIIDELG).

Belongs to the THEP1 NTPase family.

It carries out the reaction a ribonucleoside 5'-triphosphate + H2O = a ribonucleoside 5'-diphosphate + phosphate + H(+). Functionally, has nucleotide phosphatase activity towards ATP, GTP, CTP, TTP and UTP. May hydrolyze nucleoside diphosphates with lower efficiency. This chain is Nucleoside-triphosphatase THEP1, found in Picrophilus torridus (strain ATCC 700027 / DSM 9790 / JCM 10055 / NBRC 100828 / KAW 2/3).